We begin with the raw amino-acid sequence, 268 residues long: Protein MGF 300-1L (268 aa).

Residues 1-175 (MVSLTTCCLK…QTFKIFYAKN (175 aa)) lie on the Cytoplasmic side of the membrane. Residues 176-193 (YSLSTLYCIFLAIYYKRY) traverse the membrane as a helical segment. Residues 194–268 (TALRKMVKIY…MYAFSQNNFW (75 aa)) are Extracellular-facing.

The protein belongs to the asfivirus MGF 300 family.

Its subcellular location is the host membrane. Its function is as follows. Plays a role in virus cell tropism, and may be required for efficient virus replication in macrophages. The protein is Protein MGF 300-1L of African swine fever virus (isolate Tick/South Africa/Pretoriuskop Pr4/1996) (ASFV).